Reading from the N-terminus, the 34-residue chain is Toxin Ptu1 (34 aa).

3 disulfides stabilise this stretch: Cys-5–Cys-20, Cys-12–Cys-26, and Cys-19–Cys-33.

It is found in the secreted. Its function is as follows. Binds reversibly and blocks N-type voltage-gated calcium channels (Cav). The chain is Toxin Ptu1 from Peirates turpis (Assassin bug).